Consider the following 201-residue polypeptide: Protein GrpE (201 aa).

Belongs to the GrpE family. In terms of assembly, homodimer.

Its subcellular location is the cytoplasm. In terms of biological role, participates actively in the response to hyperosmotic and heat shock by preventing the aggregation of stress-denatured proteins, in association with DnaK and GrpE. It is the nucleotide exchange factor for DnaK and may function as a thermosensor. Unfolded proteins bind initially to DnaJ; upon interaction with the DnaJ-bound protein, DnaK hydrolyzes its bound ATP, resulting in the formation of a stable complex. GrpE releases ADP from DnaK; ATP binding to DnaK triggers the release of the substrate protein, thus completing the reaction cycle. Several rounds of ATP-dependent interactions between DnaJ, DnaK and GrpE are required for fully efficient folding. The protein is Protein GrpE of Shewanella frigidimarina (strain NCIMB 400).